Consider the following 94-residue polypeptide: Small ribosomal subunit protein bS18 (94 aa).

A compositionally biased stretch (polar residues) spans Met1–Arg11. The disordered stretch occupies residues Met1–Arg24.

It belongs to the bacterial ribosomal protein bS18 family. As to quaternary structure, part of the 30S ribosomal subunit. Forms a tight heterodimer with protein bS6.

Binds as a heterodimer with protein bS6 to the central domain of the 16S rRNA, where it helps stabilize the platform of the 30S subunit. The sequence is that of Small ribosomal subunit protein bS18 from Pelobacter propionicus (strain DSM 2379 / NBRC 103807 / OttBd1).